The chain runs to 977 residues: MGIISKRKRHVEDSNSSSDDDDGFDITSNIGLNTADSSDESESSGDDEEEVQDIVDFSDEEDTKKKPKSSNKTLTDNNSFPSLEISDDEDSNNKGDHEDDDDDLNDYFSINNSEKSKHKKGSFPSFGFSKLILSNVHKKGFRQPTPIQRKTIPLILQKRDIVGMARTGSGKTAAFVLPMIEKLKSHSSKIGARAVILSPSRELALQTHRVFKEFSKGTHLRSVLLTGGDSLEDQFSMMMSNPDVIVATPGRFLHLKVEMSLDLKTVEYVVFDEADRLFEMGFQEQLNELLAALPMNRQTLLFSATLPSSLVDFAKAGLTNPVLVRLDAETKISENLEILFLSTKNEERENNLLYLLQDVIKIPLGTDDQIKKLSDFNKSLSDSDSEDEDNKGKQNSRKSKKGKFQKLKVSASNELPTEKSTIVFAPTRHHVEYITQLLKDSGFLVSYLYGTLDQHARKRQLLNFRAGLTSILVVTDVAARGVDIPMLANVINYSLPASSKIFIHRVGRTARAGNRGWAYSIVSETELPYMLDLELFLGKKILLTSMYEASCKLMKSKWIADGNTESSFEDPKISYTNRLVLGSAPRYDIESVGDLYKNIIESNFDLQMAKKVSLKAEKLYCRTRTAASPESIKRSKEVIASGWDEQNIRFGRNLEKEKLNFLAKFQNRRNKETVFEFGKNPNDDTAILMQKRRKQIAPIQRKARKRQELLDKERVAGLTHKIEDEILKGEDHEAGYSVPEEALKSFEDADKILEEQESSRKKKSKTFRDPNFFISHYAPAGDIQDKQLQITSGFTNDAAQAAYDLNDDDKVQVHKQTATVKWDKKRKKYVNMQGIDNKKYIIGESGQKIPASFKSGKFAEWSKSRNIKGIKTGARETSIPTNLLSDPTTDSGSQRGPGGRFKHKQNKAPRLPDKFRDDYQSQKKKVQSAIERGVSVKGFGGSSGNTELKTTAQIRKERMAKEKKRQKNARPTKKRKF.

A disordered region spans residues 1 to 121 (MGIISKRKRH…NSEKSKHKKG (121 aa)). The span at 26–35 (ITSNIGLNTA) shows a compositional bias: polar residues. Residues 37–61 (SSDESESSGDDEEEVQDIVDFSDEE) are compositionally biased toward acidic residues. Residues 70 to 81 (SNKTLTDNNSFP) show a composition bias toward polar residues. Positions 121-149 (GSFPSFGFSKLILSNVHKKGFRQPTPIQR) match the Q motif motif. A Helicase ATP-binding domain is found at 152-324 (IPLILQKRDI…KAGLTNPVLV (173 aa)). ATP is bound at residue 165-172 (ARTGSGKT). The DEAD box signature appears at 272–275 (DEAD). Disordered regions lie at residues 377–403 (NKSL…KKGK) and 871–977 (KTGA…KRKF). Over residues 394 to 403 (QNSRKSKKGK) the composition is skewed to basic residues. Residues 403–554 (KFQKLKVSAS…SMYEASCKLM (152 aa)) enclose the Helicase C-terminal domain. Residues 878–894 (SIPTNLLSDPTTDSGSQ) are compositionally biased toward polar residues. A compositionally biased stretch (basic and acidic residues) spans 910–921 (RLPDKFRDDYQS). Residues 961–977 (KEKKRQKNARPTKKRKF) show a composition bias toward basic residues.

The protein belongs to the DEAD box helicase family. DDX54/DBP10 subfamily.

The protein localises to the nucleus. The protein resides in the nucleolus. The catalysed reaction is ATP + H2O = ADP + phosphate + H(+). ATP-binding RNA helicase involved in the biogenesis of 60S ribosomal subunits and is required for the normal formation of 25S and 5.8S rRNAs. The protein is ATP-dependent RNA helicase DBP10 (DBP10) of Vanderwaltozyma polyspora (strain ATCC 22028 / DSM 70294 / BCRC 21397 / CBS 2163 / NBRC 10782 / NRRL Y-8283 / UCD 57-17) (Kluyveromyces polysporus).